A 158-amino-acid polypeptide reads, in one-letter code: NAD(P)H-quinone oxidoreductase subunit J, chloroplastic (158 aa).

Belongs to the complex I 30 kDa subunit family. In terms of assembly, NDH is composed of at least 16 different subunits, 5 of which are encoded in the nucleus.

It is found in the plastid. The protein localises to the chloroplast thylakoid membrane. It carries out the reaction a plastoquinone + NADH + (n+1) H(+)(in) = a plastoquinol + NAD(+) + n H(+)(out). It catalyses the reaction a plastoquinone + NADPH + (n+1) H(+)(in) = a plastoquinol + NADP(+) + n H(+)(out). Functionally, NDH shuttles electrons from NAD(P)H:plastoquinone, via FMN and iron-sulfur (Fe-S) centers, to quinones in the photosynthetic chain and possibly in a chloroplast respiratory chain. The immediate electron acceptor for the enzyme in this species is believed to be plastoquinone. Couples the redox reaction to proton translocation, and thus conserves the redox energy in a proton gradient. This is NAD(P)H-quinone oxidoreductase subunit J, chloroplastic from Chloranthus spicatus (Chulantree).